The chain runs to 118 residues: MELGLSWIFLLAILKGVQCEVQLVESGGGLVQPGRSLRLSCAASGFTFDDYAMHWVRQAPGKGLEWVSGISWNSGSIGYADSVKGRFTISRDNAKNSLYLQMNSLRAEDTALYYCAKD.

The signal sequence occupies residues 1-19 (MELGLSWIFLLAILKGVQC). The framework-1 stretch occupies residues 20–44 (EVQLVESGGGLVQPGRSLRLSCAAS). The Ig-like domain maps to 20–118 (EVQLVESGGG…DTALYYCAKD (99 aa)). Cysteine 41 and cysteine 115 are disulfide-bonded. The tract at residues 45-52 (GFTFDDYA) is complementarity-determining-1. The framework-2 stretch occupies residues 53–69 (MHWVRQAPGKGLEWVSG). The segment at 70–77 (ISWNSGSI) is complementarity-determining-2. Positions 78–115 (GYADSVKGRFTISRDNAKNSLYLQMNSLRAEDTALYYC) are framework-3. Residues 116–118 (AKD) form a complementarity-determining-3 region.

In terms of assembly, immunoglobulins are composed of two identical heavy chains and two identical light chains; disulfide-linked.

It is found in the secreted. The protein resides in the cell membrane. Its function is as follows. V region of the variable domain of immunoglobulin heavy chains that participates in the antigen recognition. Immunoglobulins, also known as antibodies, are membrane-bound or secreted glycoproteins produced by B lymphocytes. In the recognition phase of humoral immunity, the membrane-bound immunoglobulins serve as receptors which, upon binding of a specific antigen, trigger the clonal expansion and differentiation of B lymphocytes into immunoglobulins-secreting plasma cells. Secreted immunoglobulins mediate the effector phase of humoral immunity, which results in the elimination of bound antigens. The antigen binding site is formed by the variable domain of one heavy chain, together with that of its associated light chain. Thus, each immunoglobulin has two antigen binding sites with remarkable affinity for a particular antigen. The variable domains are assembled by a process called V-(D)-J rearrangement and can then be subjected to somatic hypermutations which, after exposure to antigen and selection, allow affinity maturation for a particular antigen. In Homo sapiens (Human), this protein is Immunoglobulin heavy variable 3-9.